Here is a 163-residue protein sequence, read N- to C-terminus: 3-isopropylmalate dehydratase small subunit (163 aa).

It belongs to the LeuD family. LeuD type 2 subfamily. As to quaternary structure, heterodimer of LeuC and LeuD.

It carries out the reaction (2R,3S)-3-isopropylmalate = (2S)-2-isopropylmalate. It participates in amino-acid biosynthesis; L-leucine biosynthesis; L-leucine from 3-methyl-2-oxobutanoate: step 2/4. Catalyzes the isomerization between 2-isopropylmalate and 3-isopropylmalate, via the formation of 2-isopropylmaleate. The polypeptide is 3-isopropylmalate dehydratase small subunit (Brachyspira hyodysenteriae (strain ATCC 49526 / WA1)).